The primary structure comprises 174 residues: MNKEGKHQLVAEVHDKLQRAKAVFLADFRGMNVGQATDLRNELRKADVEYKVIKNTLLELASKGTDKEALNPYFAGPTAVAISYDDPVAAAKVLSRFAKEQTNPFTLKAGVLSGKAISPADIQALADLPSREVLIAKMLGSMQAPATNFVGVLAAVPGSFVRALNAIRIKKEGN.

This sequence belongs to the universal ribosomal protein uL10 family. In terms of assembly, part of the ribosomal stalk of the 50S ribosomal subunit. The N-terminus interacts with L11 and the large rRNA to form the base of the stalk. The C-terminus forms an elongated spine to which L12 dimers bind in a sequential fashion forming a multimeric L10(L12)X complex.

Its function is as follows. Forms part of the ribosomal stalk, playing a central role in the interaction of the ribosome with GTP-bound translation factors. This is Large ribosomal subunit protein uL10 from Geotalea uraniireducens (strain Rf4) (Geobacter uraniireducens).